A 690-amino-acid polypeptide reads, in one-letter code: Glycine--tRNA ligase beta subunit (690 aa).

This sequence belongs to the class-II aminoacyl-tRNA synthetase family. As to quaternary structure, tetramer of two alpha and two beta subunits.

The protein localises to the cytoplasm. It catalyses the reaction tRNA(Gly) + glycine + ATP = glycyl-tRNA(Gly) + AMP + diphosphate. The polypeptide is Glycine--tRNA ligase beta subunit (Desulfitobacterium hafniense (strain Y51)).